The chain runs to 698 residues: uncharacterized protein (698 aa).

The signal sequence occupies residues 1–17; sequence MKKRHLLSLLALGISTA. The N-palmitoyl cysteine moiety is linked to residue Cys-18. Residue Cys-18 is the site of S-diacylglycerol cysteine attachment.

It to E.coli YmcA.

The protein resides in the cell membrane. This is an uncharacterized protein from Escherichia coli (strain K12).